A 763-amino-acid polypeptide reads, in one-letter code: Autophagy-related protein 18f (763 aa).

WD repeat units follow at residues Ala-345–Arg-385 and Phe-402–Ala-441. Residues Asn-701–Thr-711 are compositionally biased toward polar residues. The interval Asn-701–Asp-763 is disordered. Basic and acidic residues-rich tracts occupy residues Gln-712 to Glu-725 and Pro-741 to Ser-754.

It belongs to the WD repeat PROPPIN family. As to quaternary structure, component of the PI(3,5)P2 regulatory complex at least composed of ATG18, SAC/FIG4, FAB1 and VAC14. Expressed in roots, flowers and leaves.

The protein resides in the preautophagosomal structure membrane. The protein localises to the vacuole membrane. In terms of biological role, the PI(3,5)P2 regulatory complex regulates both the synthesis and turnover of phosphatidylinositol 3,5-bisphosphate (PtdIns(3,5)P2). Required for autophagy. The polypeptide is Autophagy-related protein 18f (ATG18F) (Arabidopsis thaliana (Mouse-ear cress)).